Reading from the N-terminus, the 668-residue chain is UvrABC system protein B (668 aa).

One can recognise a Helicase ATP-binding domain in the interval 25 to 176; that stretch reads THLQSGHSRQ…DQRQLLRNLA (152 aa). 38–45 contacts ATP; it reads GATGTGKT. The Beta-hairpin signature appears at 91–114; sequence YYDYYQPEAYIPVTDTFIEKTASI. In terms of domain architecture, Helicase C-terminal spans 429-591; it reads QVDDLLAEIQ…ITPQPVKKGS (163 aa). A UVR domain is found at 626–661; the sequence is PELITQLEAQMKEAAKNLEFEEAAKYRDRIKNLRSK.

This sequence belongs to the UvrB family. Forms a heterotetramer with UvrA during the search for lesions. Interacts with UvrC in an incision complex.

The protein localises to the cytoplasm. In terms of biological role, the UvrABC repair system catalyzes the recognition and processing of DNA lesions. A damage recognition complex composed of 2 UvrA and 2 UvrB subunits scans DNA for abnormalities. Upon binding of the UvrA(2)B(2) complex to a putative damaged site, the DNA wraps around one UvrB monomer. DNA wrap is dependent on ATP binding by UvrB and probably causes local melting of the DNA helix, facilitating insertion of UvrB beta-hairpin between the DNA strands. Then UvrB probes one DNA strand for the presence of a lesion. If a lesion is found the UvrA subunits dissociate and the UvrB-DNA preincision complex is formed. This complex is subsequently bound by UvrC and the second UvrB is released. If no lesion is found, the DNA wraps around the other UvrB subunit that will check the other stand for damage. The sequence is that of UvrABC system protein B from Acaryochloris marina (strain MBIC 11017).